Here is a 747-residue protein sequence, read N- to C-terminus: UPF0313 protein PA4928 (747 aa).

The region spanning 371-640 is the Radical SAM core domain; it reads AYEMIRFSVN…KSDQQRRLHK (270 aa). [4Fe-4S] cluster contacts are provided by C385, C389, and C392. A disordered region spans residues 670–747; the sequence is GKHHLVPTYQ…KKSRQPNIPR (78 aa).

Belongs to the UPF0313 family. Requires [4Fe-4S] cluster as cofactor.

The polypeptide is UPF0313 protein PA4928 (Pseudomonas aeruginosa (strain ATCC 15692 / DSM 22644 / CIP 104116 / JCM 14847 / LMG 12228 / 1C / PRS 101 / PAO1)).